A 349-amino-acid chain; its full sequence is MDTIAARALTVMRACATLQEARIVLEANVMEILGIAINRYNGLTLRGVTMRPTSLAQRNEMFFMCLDMMLSAAGINVGPISPDYTQHMATIGVLATPEIPFTTEAANEIARVTGETSTWGPARQPYGFFLETEETFQPGRWFMRAAQAVAAVVCGPDMIQVSLNAGARGDVQQIFQGRNDPMMIYLVWRRIENFAMAQGNSQQTQAGVTVSVGGVDMRAGRIIAWDGQAALHVHNPTQQNAMVQIQVVFYISMDKTLNQYPALTAEIFNVYSFRDHTWHGLRTAILNRTTLPNMLPPIFPPNDRDSILTLLLLSTLADVYTVLRPEFAIHGVNPMPGPLTRAIARAAYV.

N-linked (GlcNAc...) asparagine; by host glycosylation occurs at Asn287.

It belongs to the orbivirus VP7 family. As to quaternary structure, homotrimer that assemble in a complex of 260 capsomers on an inner scaffold composed of VP3.

Its subcellular location is the virion. In terms of biological role, the VP7 protein is one of the five proteins (with VP1, VP3, VP4, and VP6) which form the inner capsid of the virus. This chain is Core protein VP7 (Segment-7), found in Antilocapra americana (Pronghorn).